The following is a 466-amino-acid chain: Trigger factor (466 aa).

Residues 162-243 form the PPIase FKBP-type domain; sequence GDVVSIDLSA…VRSVKERELP (82 aa). Residues 428-466 form a disordered region; it reads GNTIDTSEFFGKRVSAGEAEEAEPADEGAARAASDEATT. Residues 457–466 show a composition bias toward low complexity; that stretch reads ARAASDEATT.

The protein belongs to the FKBP-type PPIase family. Tig subfamily.

It localises to the cytoplasm. The enzyme catalyses [protein]-peptidylproline (omega=180) = [protein]-peptidylproline (omega=0). Its function is as follows. Involved in protein export. Acts as a chaperone by maintaining the newly synthesized protein in an open conformation. Functions as a peptidyl-prolyl cis-trans isomerase. This is Trigger factor from Mycobacterium tuberculosis (strain ATCC 25177 / H37Ra).